Here is a 460-residue protein sequence, read N- to C-terminus: Putative RNA-guided DNA endonuclease MT2953 (460 aa).

Catalysis depends on residues D224 and E313. 4 residues coordinate Zn(2+): C372, C375, C389, and C392. The active site involves D399. Residues 415 to 460 (VVGPVGAAVKRGADRKTGPGPAGGREARKATGHPAGEQPRDGVQVK) form a disordered region.

This sequence in the N-terminal section; belongs to the transposase 2 family. In the C-terminal section; belongs to the transposase 35 family.

In terms of biological role, an RNA-guided dsDNA endonuclease. When guided by an RNA derived from the right-end element of its insertion sequence element (IS), cleaves DNA downstream of the transposon-associated motif (TAM). Cleaves supercoiled and linear DNA in a staggered manner 15-21 bases from the TAM yielding 5'-overhangs. Binds reRNA, an approximately 150 nucleotide base sRNA derived from the 3' end of its own gene, the right end (RE) of the insertion sequence (IS) plus sequence downstream of the IS. The protein is Putative RNA-guided DNA endonuclease MT2953 of Mycobacterium tuberculosis (strain CDC 1551 / Oshkosh).